The following is a 481-amino-acid chain: Acyl-CoA ligase cnsG (481 aa).

Residues 3-11 carry the PTS2-type peroxisomal targeting signal motif; sequence SPQLPPSMK. Residues 124–132, 263–268, aspartate 353, and arginine 368 each bind ATP; these read KSGTTGNPK and NGYGMT. Threonine 268 is a substrate binding site. Residues 376 to 378 and 446 to 448 contribute to the CoA site; these read GGL and AIF. Lysine 466 contacts ATP.

The protein belongs to the ATP-dependent AMP-binding enzyme family.

Its pathway is alkaloid biosynthesis. Acyl-CoA ligase; part of the gene cluster that mediates the biosynthesis of communesins, a prominent class of indole alkaloids with great potential as pharmaceuticals. Communesins are biosynthesized by the coupling of tryptamine and aurantioclavine, two building blocks derived from L-tryptophan. The L-tryptophan decarboxylase cnsB converts L-tryptophan to tryptamine, whereas the tryptophan dimethylallyltransferase cnsF converts L-tryptophan to 4-dimethylallyl tryptophan which is further transformed to aurantioclavine by the aurantioclavine synthase cnsA, probably aided by the catalase cnsD. The cytochrome P450 monooxygenase cnsC catalyzes the heterodimeric coupling between the two different indole moieties, tryptamine and aurantioclavine, to construct vicinal quaternary stereocenters and yield the heptacyclic communesin scaffold. The O-methyltransferase cnsE then methylates the communesin scaffold to produce communesin K, the simplest characterized communesin that contains the heptacyclic core. The dioxygenase cnsJ converts communesin K into communesin I. Acylation to introduce the hexadienyl group at position N16 of communesin I by the acyltransferase cnsK leads to the production of communesin B. The hexadienyl group is produced by the highly reducing polyketide synthase cnsI, before being hydrolytically removed from cnsI by the serine hydrolase cnsH, converted into hexadienyl-CoA by the CoA ligase cnsG, and then transferred to communesin I by cnsK. Surprisingly, cnsK may also be a promiscuous acyltransferase that can tolerate a range of acyl groups, including acetyl-, propionyl-, and butyryl-CoA, which lead to communesins A, G and H respectively. The roles of the alpha-ketoglutarate-dependent dioxygenases cnsM and cnsP have still to be determined. The protein is Acyl-CoA ligase cnsG of Penicillium expansum (Blue mold rot fungus).